Consider the following 73-residue polypeptide: DNA-binding protein S1FA3 (73 aa).

The Nuclear localization signal motif lies at proline 47–lysine 52. Residues proline 47 to lysine 63 are compositionally biased toward basic residues. The interval proline 47–glutamate 73 is disordered.

The protein belongs to the S1FA transcription factor family.

The protein localises to the nucleus. In terms of biological role, DNA-binding protein that specifically recognizes a negative element (S1F) within the RPS1 promoter. The protein is DNA-binding protein S1FA3 (S1FA3) of Arabidopsis thaliana (Mouse-ear cress).